The chain runs to 322 residues: Mas-related G-protein coupled receptor member X3 (322 aa).

Residues 1–31 lie on the Extracellular side of the membrane; sequence MDPTIPALGTSQTPINRREETPCYKQTLSLT. Residues 32-52 form a helical membrane-spanning segment; the sequence is VLTCIISLVGLTGNAVVLWLL. Topologically, residues 53-60 are cytoplasmic; the sequence is GFRMRRNA. A helical membrane pass occupies residues 61-81; that stretch reads VSTYILNLAAVDFLFLSGHIV. Residues 82–96 are Extracellular-facing; that stretch reads RSPLRLISIRHPISK. Residues 97–117 traverse the membrane as a helical segment; the sequence is IVNPVMTFPYFIGLSMLSAIS. Residues 118 to 139 are Cytoplasmic-facing; sequence TERCLSVLWPMWYRCRRPRHLS. Residues 140 to 160 traverse the membrane as a helical segment; the sequence is VVVCVLLWALSLLRSILEWMF. At 161–177 the chain is on the extracellular side; that stretch reads CDFLFSGADSVWCETSD. The helical transmembrane segment at 178-198 threads the bilayer; the sequence is FITIAWLIFLCVVLCGSSLVL. The Cytoplasmic portion of the chain corresponds to 199–213; it reads LVRILCGSRKMPLTR. The helical transmembrane segment at 214-234 threads the bilayer; the sequence is LYVTILLTVLVFLLCGLPFGI. Topologically, residues 235–254 are extracellular; it reads QWALFSRIHLDWKVLFCHVH. The chain crosses the membrane as a helical span at residues 255-275; sequence LISVFLSSLNSSANPIIYFFV. The Cytoplasmic segment spans residues 276–322; sequence GSFRQRQNRQNLKLVLQRALQDTPEVDEGGGRLPEETLELSVSRLEQ.

It belongs to the G-protein coupled receptor 1 family. Mas subfamily.

It is found in the cell membrane. Its function is as follows. Orphan receptor. Probably involved in the function of nociceptive neurons. May regulate nociceptor function and/or development, including the sensation or modulation of pain. Potently activated by enkephalins. This chain is Mas-related G-protein coupled receptor member X3 (MRGPRX3), found in Macaca mulatta (Rhesus macaque).